The following is a 158-amino-acid chain: MYLLNDKVAHELKKPFGKVYKELPSIEGKVVSIGDVTTKHLLSNGIIPDLSILDFKTKRNIPVDIPHKFKTIFEVENPQGCISDEAIERIKYLSTIHDRDMALIIKGEEDLLTIPVIKYFPEDTSVIYGQPDEGMVLLKITDELKQKIEKLLKEMEER.

GTP contacts are provided by D35, V36, D54, K56, E109, and D132.

The protein belongs to the GTP-dependent DPCK family.

It catalyses the reaction 3'-dephospho-CoA + GTP = GDP + CoA + H(+). Its pathway is cofactor biosynthesis; coenzyme A biosynthesis. Catalyzes the GTP-dependent phosphorylation of the 3'-hydroxyl group of dephosphocoenzyme A to form coenzyme A (CoA). The sequence is that of GTP-dependent dephospho-CoA kinase from Methanococcus maripaludis (strain DSM 14266 / JCM 13030 / NBRC 101832 / S2 / LL).